The chain runs to 839 residues: Katanin p80 WD40 repeat-containing subunit B1 homolog KTN80.3 (839 aa).

WD repeat units follow at residues 14-54 (AHSA…AILS), 57-96 (GHSS…VVRT), 99-138 (GHRS…CIHT), 141-182 (GHTR…HEFK), 184-222 (HEGK…LIGS), 225-265 (TETT…DGVD), and 267-304 (GWSN…TEPM). The DWD box motif lies at 115–131 (FFASGSLDTNLKIWDIR). Disordered regions lie at residues 303-340 (PMSG…LGKL), 357-435 (GKLS…KSAS), 501-561 (LQSK…RTNK), and 575-648 (SLVR…PSNM). Polar residues-rich tracts occupy residues 307 to 334 (GATQ…NSSK), 375 to 385 (TGRSSVSQSSD), 411 to 435 (TLSS…KSAS), 501 to 533 (LQSK…QSQP), 589 to 602 (DLIS…SSPT), and 630 to 648 (VSSS…PSNM).

The protein belongs to the WD repeat KATNB1 family. Component of KTN80-KTN1 complexes composed of a hexamer of KTN1-KTN80 heterodimers that sense microtubule (MT) geometry to confer precise MT severing. Interacts directly with AAA1/KTN1 and KTN80.1, and weakly with KTN80.4. In terms of tissue distribution, expressed in siliques, flowers, leaves, stems and roots.

It localises to the cytoplasm. Its subcellular location is the cytoskeleton. Its function is as follows. May participate in a complex which severs microtubules in an ATP-dependent manner. Microtubule severing may promote rapid reorganization of cellular microtubule arrays. Confers precision to microtubule (MT) severing by specific targeting of KTN1 to MT cleavage sites such as crossover or branching nucleation sites. Together with other KTN80s, regulates cell elongation by modulating MT organization. In Arabidopsis thaliana (Mouse-ear cress), this protein is Katanin p80 WD40 repeat-containing subunit B1 homolog KTN80.3.